We begin with the raw amino-acid sequence, 740 residues long: Phosphoribosylformylglycinamidine synthase subunit PurL (740 aa).

The active site involves H49. ATP contacts are provided by Y52 and K91. E93 is a binding site for Mg(2+). Substrate-binding positions include 94–97 and R116; that span reads SHNH. H95 (proton acceptor) is an active-site residue. D117 serves as a coordination point for Mg(2+). Residue Q245 participates in substrate binding. Mg(2+) is bound at residue D273. 317–319 is a substrate binding site; the sequence is ESQ. ATP contacts are provided by D501 and G538. Mg(2+) is bound at residue N539. S541 is a substrate binding site.

It belongs to the FGAMS family. In terms of assembly, monomer. Part of the FGAM synthase complex composed of 1 PurL, 1 PurQ and 2 PurS subunits.

The protein localises to the cytoplasm. The catalysed reaction is N(2)-formyl-N(1)-(5-phospho-beta-D-ribosyl)glycinamide + L-glutamine + ATP + H2O = 2-formamido-N(1)-(5-O-phospho-beta-D-ribosyl)acetamidine + L-glutamate + ADP + phosphate + H(+). Its pathway is purine metabolism; IMP biosynthesis via de novo pathway; 5-amino-1-(5-phospho-D-ribosyl)imidazole from N(2)-formyl-N(1)-(5-phospho-D-ribosyl)glycinamide: step 1/2. Part of the phosphoribosylformylglycinamidine synthase complex involved in the purines biosynthetic pathway. Catalyzes the ATP-dependent conversion of formylglycinamide ribonucleotide (FGAR) and glutamine to yield formylglycinamidine ribonucleotide (FGAM) and glutamate. The FGAM synthase complex is composed of three subunits. PurQ produces an ammonia molecule by converting glutamine to glutamate. PurL transfers the ammonia molecule to FGAR to form FGAM in an ATP-dependent manner. PurS interacts with PurQ and PurL and is thought to assist in the transfer of the ammonia molecule from PurQ to PurL. In Sulfurovum sp. (strain NBC37-1), this protein is Phosphoribosylformylglycinamidine synthase subunit PurL.